The primary structure comprises 508 residues: Maturase K (508 aa).

It belongs to the intron maturase 2 family. MatK subfamily.

Its subcellular location is the plastid. The protein localises to the chloroplast. In terms of biological role, usually encoded in the trnK tRNA gene intron. Probably assists in splicing its own and other chloroplast group II introns. The chain is Maturase K from Abies bracteata (Bristle-cone fir).